A 572-amino-acid chain; its full sequence is Enolase 4 (572 aa).

The tract at residues 181-204 (IEPVPSPVTSPALGKKKGSGKGKK) is disordered. Basic residues predominate over residues 194-204 (GKKKGSGKGKK). A substrate-binding site is contributed by Glu-288. Catalysis depends on Lys-468, which acts as the Proton acceptor. Lys-519 lines the substrate pocket.

This sequence belongs to the enolase family.

The enzyme catalyses (2R)-2-phosphoglycerate = phosphoenolpyruvate + H2O. The protein operates within carbohydrate degradation; glycolysis; pyruvate from D-glyceraldehyde 3-phosphate: step 4/5. The chain is Enolase 4 (eno4) from Xenopus laevis (African clawed frog).